A 362-amino-acid polypeptide reads, in one-letter code: Peptide chain release factor 1 (362 aa).

Gln237 is modified (N5-methylglutamine).

The protein belongs to the prokaryotic/mitochondrial release factor family. Post-translationally, methylated by PrmC. Methylation increases the termination efficiency of RF1.

It localises to the cytoplasm. In terms of biological role, peptide chain release factor 1 directs the termination of translation in response to the peptide chain termination codons UAG and UAA. This Vibrio vulnificus (strain CMCP6) protein is Peptide chain release factor 1.